The following is a 338-amino-acid chain: UDP-3-O-acylglucosamine N-acyltransferase (338 aa).

Histidine 239 acts as the Proton acceptor in catalysis.

It belongs to the transferase hexapeptide repeat family. LpxD subfamily. As to quaternary structure, homotrimer.

The catalysed reaction is a UDP-3-O-[(3R)-3-hydroxyacyl]-alpha-D-glucosamine + a (3R)-hydroxyacyl-[ACP] = a UDP-2-N,3-O-bis[(3R)-3-hydroxyacyl]-alpha-D-glucosamine + holo-[ACP] + H(+). It participates in bacterial outer membrane biogenesis; LPS lipid A biosynthesis. Functionally, catalyzes the N-acylation of UDP-3-O-acylglucosamine using 3-hydroxyacyl-ACP as the acyl donor. Is involved in the biosynthesis of lipid A, a phosphorylated glycolipid that anchors the lipopolysaccharide to the outer membrane of the cell. This chain is UDP-3-O-acylglucosamine N-acyltransferase, found in Thermosynechococcus vestitus (strain NIES-2133 / IAM M-273 / BP-1).